A 66-amino-acid chain; its full sequence is Large ribosomal subunit protein bL35 (66 aa).

Residues methionine 1 to arginine 16 show a composition bias toward basic residues. The tract at residues methionine 1 to glycine 20 is disordered.

The protein belongs to the bacterial ribosomal protein bL35 family.

The chain is Large ribosomal subunit protein bL35 from Streptococcus thermophilus (strain ATCC BAA-250 / LMG 18311).